The sequence spans 212 residues: uncharacterized protein (212 aa).

S-adenosyl-L-methionine is bound by residues glycine 53, glutamate 74, and aspartate 97.

The protein belongs to the methyltransferase superfamily. YrrT family.

Functionally, could be a S-adenosyl-L-methionine-dependent methyltransferase. This is an uncharacterized protein from Bacillus cereus (strain 03BB102).